We begin with the raw amino-acid sequence, 274 residues long: MYRIIAADLDGTLLSPENKITKYTEKIIKFLIEKGFYFVFASGRHYIDIMKIRDTLNIKVFMITSNGAQVYDLNNVLIFENHLDEEIALKLCKMKYLDADIITQVYRNNQWYINNNKIDNNFCPTLSSLRYKYFCPDVFNFKKVSKVFFTSHNLKKLHTLQKDIISFLGNRVNVHFSVPGCLEVVSGEVSKGYGLKLISNILGISLKECITFGDGMNDQDMLSISGKACIMENADSSLKKNLPYAEVIGSNKNDGVAVFLNKNFIKNNKFIKCF.

Catalysis depends on aspartate 8, which acts as the Nucleophile. Residue aspartate 8 participates in Mg(2+) binding. Leucine 9 is a binding site for phosphate. Aspartate 10 lines the Mg(2+) pocket. Residues serine 42 to glycine 43 and lysine 191 contribute to the phosphate site. Aspartate 214 is a Mg(2+) binding site. Phosphate is bound at residue asparagine 217.

It belongs to the HAD-like hydrolase superfamily. Cof family. Mg(2+) serves as cofactor.

This chain is Putative phosphatase BUsg_029, found in Buchnera aphidicola subsp. Schizaphis graminum (strain Sg).